The following is a 450-amino-acid chain: BAG family molecular chaperone regulator 5 (450 aa).

BAG domains are found at residues 9–86 (SIKR…EQNA), 95–167 (EAIF…ESCA), 182–260 (SVSK…DLDE), 275–350 (SILK…DLKE), and 365–442 (EHQS…YYLD).

In terms of assembly, binds to the ATPase domain of HSP/HSC70 chaperones.

Its function is as follows. Co-chaperone for HSP/HSP70 proteins. It functions as a nucleotide-exchange factor promoting the release of ADP from HSP70, thereby activating HSP70-mediated protein refolding. The sequence is that of BAG family molecular chaperone regulator 5 (BAG5) from Gallus gallus (Chicken).